The following is a 199-amino-acid chain: Probable chemoreceptor glutamine deamidase CheD (199 aa).

This sequence belongs to the CheD family.

The enzyme catalyses L-glutaminyl-[protein] + H2O = L-glutamyl-[protein] + NH4(+). Its function is as follows. Probably deamidates glutamine residues to glutamate on methyl-accepting chemotaxis receptors (MCPs), playing an important role in chemotaxis. In Cereibacter sphaeroides (strain ATCC 17029 / ATH 2.4.9) (Rhodobacter sphaeroides), this protein is Probable chemoreceptor glutamine deamidase CheD.